A 400-amino-acid polypeptide reads, in one-letter code: MEKLTIRDVDLKGKRVIMRVDFNVPIKDGVVTDDTRIVEALPTIKYVLEQGAKVILLTHLGRPKGGPDPKYTVKPAAERLAQLLGKEVKFVPALYGEEVEKAVAELKEGEVLMLENTRFDPGEEKNDLELAKKWASLADIHVNDAFGTAHRAHSSNVGIAQYIPSVAGFLMEKEIKFLSKATHNPDKPYVVVLGGAKVSDKIGVITNLLNKADKIIIGGAMMFTFWRALGKQTGNSLVEEDKIDLAKQLLEQAKEKGVELVIPTDAVCAQKMEAGVEKKVFTCEEGIPEGWAGYDIGPASIELIKSKLADAKTIVWNGPLGVFEIEDFANGTKAVAEFIASLTDKGVTTVVGGGDSAAAVSQFGLEKKFSHVSTGGGASLEFLEGKELPGIASIADKKKQ.

Substrate is bound by residues 21–23 (DFN), Arg-36, 59–62 (HLGR), Arg-118, and Arg-151. Residues Lys-201, Gly-293, Glu-324, and 353–356 (GGDS) each bind ATP.

This sequence belongs to the phosphoglycerate kinase family. Monomer.

Its subcellular location is the cytoplasm. It carries out the reaction (2R)-3-phosphoglycerate + ATP = (2R)-3-phospho-glyceroyl phosphate + ADP. Its pathway is carbohydrate degradation; glycolysis; pyruvate from D-glyceraldehyde 3-phosphate: step 2/5. This is Phosphoglycerate kinase from Fervidobacterium nodosum (strain ATCC 35602 / DSM 5306 / Rt17-B1).